The primary structure comprises 493 residues: Ketol-acid reductoisomerase (NADP(+)) (493 aa).

A KARI N-terminal Rossmann domain is found at 14–208; it reads LDQLGRCRFM…GGDRAGVLES (195 aa). NADP(+) contacts are provided by residues 45–48, arginine 68, arginine 76, serine 78, and 108–110; these read CGAQ and DKQ. Histidine 132 is a catalytic residue. Glycine 158 serves as a coordination point for NADP(+). 2 KARI C-terminal knotted domains span residues 209–345 and 346–486; these read SFVA…SPKA and DGIK…MTDM. 4 residues coordinate Mg(2+): aspartate 217, glutamate 221, glutamate 390, and glutamate 394. Serine 415 is a substrate binding site.

It belongs to the ketol-acid reductoisomerase family. Mg(2+) serves as cofactor.

It carries out the reaction (2R)-2,3-dihydroxy-3-methylbutanoate + NADP(+) = (2S)-2-acetolactate + NADPH + H(+). The enzyme catalyses (2R,3R)-2,3-dihydroxy-3-methylpentanoate + NADP(+) = (S)-2-ethyl-2-hydroxy-3-oxobutanoate + NADPH + H(+). It functions in the pathway amino-acid biosynthesis; L-isoleucine biosynthesis; L-isoleucine from 2-oxobutanoate: step 2/4. Its pathway is amino-acid biosynthesis; L-valine biosynthesis; L-valine from pyruvate: step 2/4. Its function is as follows. Involved in the biosynthesis of branched-chain amino acids (BCAA). Catalyzes an alkyl-migration followed by a ketol-acid reduction of (S)-2-acetolactate (S2AL) to yield (R)-2,3-dihydroxy-isovalerate. In the isomerase reaction, S2AL is rearranged via a Mg-dependent methyl migration to produce 3-hydroxy-3-methyl-2-ketobutyrate (HMKB). In the reductase reaction, this 2-ketoacid undergoes a metal-dependent reduction by NADPH to yield (R)-2,3-dihydroxy-isovalerate. The sequence is that of Ketol-acid reductoisomerase (NADP(+)) from Actinobacillus pleuropneumoniae serotype 3 (strain JL03).